The chain runs to 601 residues: Elongation factor 4 (601 aa).

In terms of domain architecture, tr-type G spans Arg-7–Lys-189. GTP is bound by residues Asp-19–Thr-24 and Asn-136–Asp-139.

This sequence belongs to the TRAFAC class translation factor GTPase superfamily. Classic translation factor GTPase family. LepA subfamily.

The protein resides in the cell inner membrane. It catalyses the reaction GTP + H2O = GDP + phosphate + H(+). Required for accurate and efficient protein synthesis under certain stress conditions. May act as a fidelity factor of the translation reaction, by catalyzing a one-codon backward translocation of tRNAs on improperly translocated ribosomes. Back-translocation proceeds from a post-translocation (POST) complex to a pre-translocation (PRE) complex, thus giving elongation factor G a second chance to translocate the tRNAs correctly. Binds to ribosomes in a GTP-dependent manner. This Xanthomonas campestris pv. campestris (strain ATCC 33913 / DSM 3586 / NCPPB 528 / LMG 568 / P 25) protein is Elongation factor 4.